Reading from the N-terminus, the 186-residue chain is Myosin light chain 1, skeletal muscle isoform (186 aa).

Blocked amino end (Met) is present on Met1. The disordered stretch occupies residues 1–26 (MPKAPAKKAEPAPAPAPAPEPAPAPA). The segment covering 12-26 (APAPAPAPEPAPAPA) has biased composition (pro residues). EF-hand domains are found at residues 42 to 77 (DQIEDYREAFGLFDRVGDNKVAYNQIADIMRALGQN) and 119 to 154 (AGFEDYVEGLRVFDKEGNGTVMGAELRIVLSTLGEK).

In terms of assembly, myosin is a hexamer of 2 heavy chains and 4 light chains.

The sequence is that of Myosin light chain 1, skeletal muscle isoform from Chelon ramada (Thin-lipped grey mullet).